The following is a 754-amino-acid chain: C2H2 finger domain transcription factor crzA (754 aa).

Disordered regions lie at residues 1 to 51 (MASQ…TVTG), 63 to 150 (SFAN…FSDL), 187 to 227 (VHQQ…QGST), 269 to 299 (QGHRRAPSEVSEISSAAPSPYLSQHESFDGV), and 384 to 543 (GAEG…RVQK). A compositionally biased stretch (low complexity) spans 30-44 (HQQQQQQQHQQHQGQ). Polar residues-rich tracts occupy residues 63–80 (SFANSSFDPNSNNVSPSA) and 94–114 (TPASQTDQNYANSLQIPQSYG). Residues 130 to 140 (QQQSQQQHHQQ) are compositionally biased toward low complexity. A compositionally biased stretch (polar residues) spans 141–150 (PSLDDNFSDL). Residues 189 to 209 (QQSHPTQIPSSHSSTSPQISP) are compositionally biased toward low complexity. 2 stretches are compositionally biased toward polar residues: residues 210 to 227 (LEQQQHSSPGPMSTQGST) and 279 to 293 (SEISSAAPSPYLSQH). Low complexity-rich tracts occupy residues 459–472 (STSRLRSSSTSSSL) and 491–515 (RQQQSNPSSRDPSPSRSNRRLSTSS). C2H2-type zinc fingers lie at residues 548–570 (FQCNLCPKRFTRAYNLRSHLRTH) and 576–598 (FVCTVCGKAFARQHDRKRHEGLH). The C2H2-type 3; degenerate zinc finger occupies 604–635 (FVCQGELSRGGQWGCGRRFARADALGRHFRSE). The tract at residues 708 to 737 (ADDPSDIGGRSSFDASSGNEFGFEDDDSGL) is disordered.

The protein localises to the nucleus. The protein resides in the cytoplasm. Its function is as follows. Transcription factor involved in the regulation of calcium ion homeostasis. Regulates genes encoding calcium transporters, transcription factors and genes that could be directly or indirectly involved in calcium metabolism. Supports especially pmcA, pmcB and pmcC expression encoding for calcium-translocating P-type ATPases. Binds target promoters at motif A[GT][CG]CA[AC][AG]. Plays an essential role germination, radial growth, and asexual development. Also plays a major role in proper chitin and glucan incorporation into the cell wall. Involved in the high-osmolarity glycerol response (HOG) signaling pathway. Required for pathogenicity in an experimental murine model of invasive pulmonary aspergillosis. This Aspergillus fumigatus (strain ATCC MYA-4609 / CBS 101355 / FGSC A1100 / Af293) (Neosartorya fumigata) protein is C2H2 finger domain transcription factor crzA.